The chain runs to 236 residues: 2-C-methyl-D-erythritol 4-phosphate cytidylyltransferase (236 aa).

Belongs to the IspD/TarI cytidylyltransferase family. IspD subfamily. In terms of assembly, homodimer.

The catalysed reaction is 2-C-methyl-D-erythritol 4-phosphate + CTP + H(+) = 4-CDP-2-C-methyl-D-erythritol + diphosphate. It participates in isoprenoid biosynthesis; isopentenyl diphosphate biosynthesis via DXP pathway; isopentenyl diphosphate from 1-deoxy-D-xylulose 5-phosphate: step 2/6. Functionally, catalyzes the formation of 4-diphosphocytidyl-2-C-methyl-D-erythritol from CTP and 2-C-methyl-D-erythritol 4-phosphate (MEP). The protein is 2-C-methyl-D-erythritol 4-phosphate cytidylyltransferase of Cronobacter sakazakii (strain ATCC BAA-894) (Enterobacter sakazakii).